A 325-amino-acid polypeptide reads, in one-letter code: Homoserine O-succinyltransferase (325 aa).

Catalysis depends on Cys142, which acts as the Acyl-thioester intermediate. Substrate is bound by residues Lys163 and Ser191. His234 serves as the catalytic Proton acceptor. Residue Glu236 is part of the active site. Arg248 serves as a coordination point for substrate.

This sequence belongs to the MetA family.

It localises to the cytoplasm. The enzyme catalyses L-homoserine + succinyl-CoA = O-succinyl-L-homoserine + CoA. It functions in the pathway amino-acid biosynthesis; L-methionine biosynthesis via de novo pathway; O-succinyl-L-homoserine from L-homoserine: step 1/1. Its function is as follows. Transfers a succinyl group from succinyl-CoA to L-homoserine, forming succinyl-L-homoserine. The sequence is that of Homoserine O-succinyltransferase from Bradyrhizobium japonicum.